Here is a 1126-residue protein sequence, read N- to C-terminus: Translation initiation factor IF-2 (1126 aa).

Residues 63-519 (LSINKPSIKK…TTRQRQKRRA (457 aa)) form a disordered region. Basic and acidic residues predominate over residues 70-83 (IKKDNFKQNKEDKS). Residues 93–111 (PLKNNSNKKPLLIKPLNKP) show a composition bias toward low complexity. A compositionally biased stretch (polar residues) spans 116-151 (KISNQLQNPNKPNIVNSSQSRANLTNTNSKPSQNFN). Pro residues predominate over residues 161 to 171 (TPPPIKSPAKP). Polar residues predominate over residues 181–195 (NINNNVKSSESSQNI). Low complexity-rich tracts occupy residues 211–224 (NTNKPKTKNFNNRK) and 240–252 (IINPNKQNNNKQN). The segment covering 254–264 (AFKQTASNRPG) has biased composition (polar residues). Low complexity-rich tracts occupy residues 291-315 (NRQGNPNRPGSPNRPGMPNRPGLRN) and 327-349 (NRQGNPNRPGSPNGPGMPNNRPG). A compositionally biased stretch (basic and acidic residues) spans 429 to 443 (GKTDWDDSAKLEALR). Residues 501 to 517 (KQFKKKKKETTRQRQKR) are compositionally biased toward basic residues. A tr-type G domain is found at 618–790 (RRPPVITVMG…ILLVSDVEDL (173 aa)). A G1 region spans residues 627–634 (GHVDHGKT). 627–634 (GHVDHGKT) lines the GTP pocket. A G2 region spans residues 652-656 (GITQH). Residues 677–680 (DTPG) form a G3 region. GTP contacts are provided by residues 677–681 (DTPGH) and 731–734 (NKID). Residues 731 to 734 (NKID) form a G4 region. Positions 767–769 (SAI) are G5.

Belongs to the TRAFAC class translation factor GTPase superfamily. Classic translation factor GTPase family. IF-2 subfamily.

It is found in the cytoplasm. One of the essential components for the initiation of protein synthesis. Protects formylmethionyl-tRNA from spontaneous hydrolysis and promotes its binding to the 30S ribosomal subunits. Also involved in the hydrolysis of GTP during the formation of the 70S ribosomal complex. This chain is Translation initiation factor IF-2, found in Prochlorococcus marinus (strain AS9601).